We begin with the raw amino-acid sequence, 244 residues long: Lactate utilization protein A (244 aa).

This sequence belongs to the LutA/YkgE family.

In terms of biological role, is involved in L-lactate degradation and allows cells to grow with lactate as the sole carbon source. This chain is Lactate utilization protein A, found in Oceanobacillus iheyensis (strain DSM 14371 / CIP 107618 / JCM 11309 / KCTC 3954 / HTE831).